The chain runs to 511 residues: Phosphomethylpyrimidine synthase (511 aa).

Substrate-binding positions include N127, M156, Y185, H221, 241 to 243 (SRG), 282 to 285 (DGLR), and E321. H325 serves as a coordination point for Zn(2+). Position 348 (Y348) interacts with substrate. Position 389 (H389) interacts with Zn(2+). [4Fe-4S] cluster contacts are provided by C469, C472, and C477. Positions 492–511 (KGMEEKSEVTICNRKKESGK) are disordered.

Belongs to the ThiC family. [4Fe-4S] cluster is required as a cofactor.

The catalysed reaction is 5-amino-1-(5-phospho-beta-D-ribosyl)imidazole + S-adenosyl-L-methionine = 4-amino-2-methyl-5-(phosphooxymethyl)pyrimidine + CO + 5'-deoxyadenosine + formate + L-methionine + 3 H(+). It participates in cofactor biosynthesis; thiamine diphosphate biosynthesis. Catalyzes the synthesis of the hydroxymethylpyrimidine phosphate (HMP-P) moiety of thiamine from aminoimidazole ribotide (AIR) in a radical S-adenosyl-L-methionine (SAM)-dependent reaction. In Leptospira borgpetersenii serovar Hardjo-bovis (strain JB197), this protein is Phosphomethylpyrimidine synthase.